Reading from the N-terminus, the 372-residue chain is E3 ubiquitin-protein ligase RNF34 (372 aa).

Residues 56–107 form an FYVE-type zinc finger; the sequence is EGPNIVCKACGLSFSVFRKKHVCCDCKKDFCSVCSVLQENLRRCSTCHLLQE. Residues 115-134 form the SAP 1 domain; it reads LMRLKVKDLRQYLILRNIPI. Residue Ser-169 is modified to Phosphoserine. The segment at 194-253 is disordered; that stretch reads QGELMDGDQTSRSGVPAQVQSEITSANTEDDDDDDDEDDDDEEENAEDRNPGLSKERVRA. Residues 201–220 are compositionally biased toward polar residues; sequence DQTSRSGVPAQVQSEITSAN. Residues 221 to 239 are compositionally biased toward acidic residues; sequence TEDDDDDDDEDDDDEEENA. The span at 240–252 shows a compositional bias: basic and acidic residues; it reads EDRNPGLSKERVR. Phosphoserine is present on residues Ser-254 and Ser-256. In terms of domain architecture, SAP 2 spans 264–278; it reads VEGMSVRQLKEILAR. An RING-type zinc finger spans residues 325–360; it reads CRICMDAVIDCVLLECGHMVTCTKCGKRMSECPICR.

In terms of assembly, interacts with CASP8 and CASP10. Interacts (via RING-type zinc finger) with PPARGC1A. Interacts with NOD1. Interacts with p53/TP53; involved in p53/TP53 ubiquitination. Interacts (via RING-type zinc finger) with MDM2; the interaction stabilizes MDM2. Autoubiquitinated (in vitro). In terms of processing, proteolytically cleaved by caspases upon induction of apoptosis by TNF. In terms of tissue distribution, ubiquitous. Detected in heart, brain, liver, skeletal muscle, kidney, pancreas, spleen, thymus, prostate, testis, ovary, colon and leukocytes.

Its subcellular location is the cell membrane. The protein resides in the endomembrane system. It localises to the nucleus. It is found in the nucleus speckle. The protein localises to the cytoplasm. Its subcellular location is the cytosol. It catalyses the reaction S-ubiquitinyl-[E2 ubiquitin-conjugating enzyme]-L-cysteine + [acceptor protein]-L-lysine = [E2 ubiquitin-conjugating enzyme]-L-cysteine + N(6)-ubiquitinyl-[acceptor protein]-L-lysine.. The protein operates within protein modification; protein ubiquitination. Functionally, E3 ubiquitin-protein ligase that regulates several biological processes through the ubiquitin-mediated proteasomal degradation of various target proteins. Ubiquitinates the caspases CASP8 and CASP10, promoting their proteasomal degradation, to negatively regulate cell death downstream of death domain receptors in the extrinsic pathway of apoptosis. May mediate 'Lys-48'-linked polyubiquitination of RIPK1 and its subsequent proteasomal degradation thereby indirectly regulating the tumor necrosis factor-mediated signaling pathway. Negatively regulates p53/TP53 through its direct ubiquitination and targeting to proteasomal degradation. Indirectly, may also negatively regulate p53/TP53 through ubiquitination and degradation of SFN. Mediates PPARGC1A proteasomal degradation probably through ubiquitination thereby indirectly regulating the metabolism of brown fat cells. Possibly involved in innate immunity, through 'Lys-48'-linked polyubiquitination of NOD1 and its subsequent proteasomal degradation. The chain is E3 ubiquitin-protein ligase RNF34 from Homo sapiens (Human).